We begin with the raw amino-acid sequence, 128 residues long: Small ribosomal subunit protein eS8 (128 aa).

This sequence belongs to the eukaryotic ribosomal protein eS8 family. Part of the 30S ribosomal subunit.

In Methanococcus aeolicus (strain ATCC BAA-1280 / DSM 17508 / OCM 812 / Nankai-3), this protein is Small ribosomal subunit protein eS8.